A 346-amino-acid polypeptide reads, in one-letter code: Small ribosomal subunit biogenesis GTPase RsgA 1 (346 aa).

Residues 93–248 (EEQLIAANFD…IIDTPGMREF (156 aa)) enclose the CP-type G domain. GTP contacts are provided by residues 138 to 141 (TKAD) and 190 to 198 (GSSGVGKSS). Residues Cys271, Cys276, His278, and Cys284 each coordinate Zn(2+).

It belongs to the TRAFAC class YlqF/YawG GTPase family. RsgA subfamily. In terms of assembly, monomer. Associates with 30S ribosomal subunit, binds 16S rRNA. The cofactor is Zn(2+).

Its subcellular location is the cytoplasm. One of several proteins that assist in the late maturation steps of the functional core of the 30S ribosomal subunit. Helps release RbfA from mature subunits. May play a role in the assembly of ribosomal proteins into the subunit. Circularly permuted GTPase that catalyzes slow GTP hydrolysis, GTPase activity is stimulated by the 30S ribosomal subunit. This Listeria innocua serovar 6a (strain ATCC BAA-680 / CLIP 11262) protein is Small ribosomal subunit biogenesis GTPase RsgA 1.